We begin with the raw amino-acid sequence, 418 residues long: Serine hydroxymethyltransferase (418 aa).

Residues Leu-121 and 125-127 (GHL) contribute to the (6S)-5,6,7,8-tetrahydrofolate site. Lys-230 is modified (N6-(pyridoxal phosphate)lysine). 356–358 (SPF) is a binding site for (6S)-5,6,7,8-tetrahydrofolate.

The protein belongs to the SHMT family. Homodimer. It depends on pyridoxal 5'-phosphate as a cofactor.

It is found in the cytoplasm. The catalysed reaction is (6R)-5,10-methylene-5,6,7,8-tetrahydrofolate + glycine + H2O = (6S)-5,6,7,8-tetrahydrofolate + L-serine. Its pathway is one-carbon metabolism; tetrahydrofolate interconversion. It participates in amino-acid biosynthesis; glycine biosynthesis; glycine from L-serine: step 1/1. In terms of biological role, catalyzes the reversible interconversion of serine and glycine with tetrahydrofolate (THF) serving as the one-carbon carrier. This reaction serves as the major source of one-carbon groups required for the biosynthesis of purines, thymidylate, methionine, and other important biomolecules. Also exhibits THF-independent aldolase activity toward beta-hydroxyamino acids, producing glycine and aldehydes, via a retro-aldol mechanism. The sequence is that of Serine hydroxymethyltransferase from Shewanella piezotolerans (strain WP3 / JCM 13877).